The primary structure comprises 319 residues: ADP-L-glycero-D-manno-heptose-6-epimerase (319 aa).

NADP(+)-binding positions include 10 to 11 (FI), 31 to 32 (DD), K38, K53, and 79 to 83 (EGACS). Catalysis depends on Y144, which acts as the Proton acceptor. K148 contributes to the NADP(+) binding site. Residue N173 participates in substrate binding. Residues V174 and K182 each coordinate NADP(+). K182 (proton acceptor) is an active-site residue. Residues S184, H191, 205 to 208 (FEGC), R218, and Y282 contribute to the substrate site.

The protein belongs to the NAD(P)-dependent epimerase/dehydratase family. HldD subfamily. Homopentamer. NADP(+) is required as a cofactor.

The enzyme catalyses ADP-D-glycero-beta-D-manno-heptose = ADP-L-glycero-beta-D-manno-heptose. Its pathway is nucleotide-sugar biosynthesis; ADP-L-glycero-beta-D-manno-heptose biosynthesis; ADP-L-glycero-beta-D-manno-heptose from D-glycero-beta-D-manno-heptose 7-phosphate: step 4/4. Catalyzes the interconversion between ADP-D-glycero-beta-D-manno-heptose and ADP-L-glycero-beta-D-manno-heptose via an epimerization at carbon 6 of the heptose. The sequence is that of ADP-L-glycero-D-manno-heptose-6-epimerase from Aeromonas salmonicida (strain A449).